We begin with the raw amino-acid sequence, 102 residues long: ATP-dependent Clp protease adapter protein ClpS (102 aa).

It belongs to the ClpS family. As to quaternary structure, binds to the N-terminal domain of the chaperone ClpA.

Functionally, involved in the modulation of the specificity of the ClpAP-mediated ATP-dependent protein degradation. This Shewanella sediminis (strain HAW-EB3) protein is ATP-dependent Clp protease adapter protein ClpS.